We begin with the raw amino-acid sequence, 100 residues long: Small ribosomal subunit protein uS14c (100 aa).

Basic and acidic residues predominate over residues methionine 1–glutamate 10. Residues methionine 1–lysine 29 are disordered.

This sequence belongs to the universal ribosomal protein uS14 family. In terms of assembly, part of the 30S ribosomal subunit.

It is found in the plastid. Its subcellular location is the chloroplast. Its function is as follows. Binds 16S rRNA, required for the assembly of 30S particles. The chain is Small ribosomal subunit protein uS14c from Acorus calamus (Sweet flag).